A 385-amino-acid chain; its full sequence is Flap endonuclease 1 (385 aa).

The interval 1–104 is N-domain; sequence MGILGLSKLI…GELAKRAERR (104 aa). Asp-34 provides a ligand contact to Mg(2+). Residues Arg-47 and Arg-70 each contribute to the DNA site. Mg(2+) is bound by residues Asp-86, Glu-158, Glu-160, Asp-179, and Asp-181. The interval 122 to 253 is I-domain; sequence GIEKFNRRLV…KRAIELINTY (132 aa). Glu-158 lines the DNA pocket. The DNA site is built by Gly-231 and Asp-233. Residue Asp-233 coordinates Mg(2+). The tract at residues 336–344 is interaction with PCNA; it reads TQVRLDSFF. Positions 346–385 are disordered; that stretch reads TLPSTPNATNAAKRKAEEAKKSANNKKAKTSGGGRGRRPK. Over residues 368–385 the composition is skewed to basic residues; it reads ANNKKAKTSGGGRGRRPK.

Belongs to the XPG/RAD2 endonuclease family. FEN1 subfamily. As to quaternary structure, interacts with PCNA. Three molecules of FEN1 bind to one PCNA trimer with each molecule binding to one PCNA monomer. PCNA stimulates the nuclease activity without altering cleavage specificity. The cofactor is Mg(2+). Post-translationally, phosphorylated. Phosphorylation upon DNA damage induces relocalization to the nuclear plasma.

The protein localises to the nucleus. It is found in the nucleolus. Its subcellular location is the nucleoplasm. The protein resides in the mitochondrion. Its function is as follows. Structure-specific nuclease with 5'-flap endonuclease and 5'-3' exonuclease activities involved in DNA replication and repair. During DNA replication, cleaves the 5'-overhanging flap structure that is generated by displacement synthesis when DNA polymerase encounters the 5'-end of a downstream Okazaki fragment. It enters the flap from the 5'-end and then tracks to cleave the flap base, leaving a nick for ligation. Also involved in the long patch base excision repair (LP-BER) pathway, by cleaving within the apurinic/apyrimidinic (AP) site-terminated flap. Acts as a genome stabilization factor that prevents flaps from equilibrating into structures that lead to duplications and deletions. Also possesses 5'-3' exonuclease activity on nicked or gapped double-stranded DNA, and exhibits RNase H activity. Also involved in replication and repair of rDNA and in repairing mitochondrial DNA. This is Flap endonuclease 1 from Drosophila simulans (Fruit fly).